The chain runs to 421 residues: Proton/sodium-glutamate symport protein (421 aa).

Over 1-3 (MRK) the chain is Cytoplasmic. A helical membrane pass occupies residues 4–24 (IGLAWQIFIGLILGIIVGAIF). Topologically, residues 25–43 (YGNPKVATYLQPIGDIFLR) are extracellular. The chain crosses the membrane as a helical span at residues 44-64 (LIKMIVIPIVISSLVVGVASV). At 65-77 (GDLKKLGKLGGKT) the chain is on the cytoplasmic side. The helical transmembrane segment at 78–98 (IIYFEIITTIAIVVGLLAANI) threads the bilayer. At 99–148 (FQPGTGVNMKSLEKTDIQSYVDTTNEVQHHSMVETFVNIVPKNIFESLTK) the chain is on the extracellular side. Residues 149–169 (GDMLPIIFFSVMFGLGVAAIG) traverse the membrane as a helical segment. The Cytoplasmic segment spans residues 170-198 (EKGKPVLQFFQGTAEAMFYVTNQIMKFAP). Residues 199–219 (FGVFALIGVTVSKFGVESLIP) traverse the membrane as a helical segment. The Extracellular segment spans residues 220-222 (LSK). Residues 223–243 (LVIVVYATMVFFIFVVLGGVA) traverse the membrane as a helical segment. A topological domain (cytoplasmic) is located at residue lysine 244. Residues 245–265 (LFGINIFHIIKILKDELILAY) form a helical membrane-spanning segment. The Extracellular segment spans residues 266 to 306 (STASSETVLPKIMEKMENFGCPKAITSFVIPTGYSFNLDGS). A helical transmembrane segment spans residues 307 to 327 (TLYQALAAIFIAQLYGIDMPI). Residues 328-330 (SQQ) lie on the Cytoplasmic side of the membrane. 2 helical membrane passes run 331–351 (ISLL…PGVS) and 352–372 (FVVL…LAFI). The Cytoplasmic segment spans residues 373–421 (AGIDRILDMARTAVNVIGNSLAAIIMSKWEGQYNEEKGKQYIAQLQQSA).

Belongs to the dicarboxylate/amino acid:cation symporter (DAACS) (TC 2.A.23) family. In terms of assembly, homotrimer.

The protein localises to the cell membrane. Functionally, this carrier protein is part of the Na(+)-dependent, binding-protein-independent glutamate-aspartate transport system. In Geobacillus stearothermophilus (Bacillus stearothermophilus), this protein is Proton/sodium-glutamate symport protein (gltT).